A 117-amino-acid chain; its full sequence is Putative membrane protein insertion efficiency factor (117 aa).

The protein belongs to the UPF0161 family.

Its subcellular location is the cell inner membrane. Could be involved in insertion of integral membrane proteins into the membrane. The sequence is that of Putative membrane protein insertion efficiency factor from Bartonella quintana (strain Toulouse) (Rochalimaea quintana).